The sequence spans 619 residues: MALLQIAEPGLSAAPHQHRLAVGIDLGTTNSLVATVRSGAATVLPDEHGYHLLPSVVRYTEDGATEVGYAARAHQSDDPHNTVVSVKRFMGRGLSDLADAAATPYRFVDAPGMVRLVTRQGEKSPVEVSADILRALKARAESSLGGELTGAVITVPAYFDDAQRQATKDAARLAGLNVLRLLNEPTAAAIAYGLDNAAEGTYVVYDLGGGTFDVSILRLTRGVFEVLATSGDSALGGDDFDHRIYCWLLEKAGLSQLPDGDIRRLLTLARAAKEHLTDNTSARINTVLSDRQVIDLELSRDELAAITRTLVDKTLLPVRRALRDARISVDDVKGVVLVGGATRMPQVRRAVGDFFKRPPLTNLDPDQVVAIGAAMQANVLAGNKGEDDWLLLDVTPLSLGLETMGGLVEKIIPRNSTIPTARAQEFTTFKDGQTAMAVHVLQGERELVSDCRSLARFELRGIPPMVAGAARIRVTFQVDADGLLSVAAREQSSGVEASITIKPSYGLTDDQITQMLTDSLAHVKDDIAARKLREAVVDAESLIATTDAALKSDGDLLAPSELQAIDNAVAALRSAIAAQQTVAINAATARLNDATNDFASRRMDRNIRRALAGQKISDL.

This sequence belongs to the heat shock protein 70 family.

Its function is as follows. Chaperone involved in the maturation of iron-sulfur cluster-containing proteins. Has a low intrinsic ATPase activity which is markedly stimulated by HscB. In Laribacter hongkongensis (strain HLHK9), this protein is Chaperone protein HscA homolog.